We begin with the raw amino-acid sequence, 393 residues long: Formate-dependent phosphoribosylglycinamide formyltransferase (393 aa).

Residues 22–23 and glutamate 82 contribute to the N(1)-(5-phospho-beta-D-ribosyl)glycinamide site; that span reads EL. ATP-binding positions include arginine 114, lysine 155, 160–165, 195–198, and glutamate 203; these read SSGKGQ and ESFV. Residues 119-308 enclose the ATP-grasp domain; that stretch reads RLAAEELGLR…EFALHVRAVL (190 aa). Positions 267 and 279 each coordinate Mg(2+). Residues aspartate 286, lysine 356, and 363–364 contribute to the N(1)-(5-phospho-beta-D-ribosyl)glycinamide site; that span reads RR.

It belongs to the PurK/PurT family. As to quaternary structure, homodimer.

The enzyme catalyses N(1)-(5-phospho-beta-D-ribosyl)glycinamide + formate + ATP = N(2)-formyl-N(1)-(5-phospho-beta-D-ribosyl)glycinamide + ADP + phosphate + H(+). The protein operates within purine metabolism; IMP biosynthesis via de novo pathway; N(2)-formyl-N(1)-(5-phospho-D-ribosyl)glycinamide from N(1)-(5-phospho-D-ribosyl)glycinamide (formate route): step 1/1. Involved in the de novo purine biosynthesis. Catalyzes the transfer of formate to 5-phospho-ribosyl-glycinamide (GAR), producing 5-phospho-ribosyl-N-formylglycinamide (FGAR). Formate is provided by PurU via hydrolysis of 10-formyl-tetrahydrofolate. This Oleidesulfovibrio alaskensis (strain ATCC BAA-1058 / DSM 17464 / G20) (Desulfovibrio alaskensis) protein is Formate-dependent phosphoribosylglycinamide formyltransferase.